The chain runs to 158 residues: Small ribosomal subunit protein uS15 (158 aa).

Over residues 1-10 (MARMHTRRRG) the composition is skewed to basic residues. Positions 1–66 (MARMHTRRRG…EGVKGTPIPD (66 aa)) are disordered. A compositionally biased stretch (acidic residues) spans 21 to 32 (DPPEWSDIDADA). A compositionally biased stretch (basic and acidic residues) spans 33 to 45 (IEERVVELAEQGH).

The protein belongs to the universal ribosomal protein uS15 family. As to quaternary structure, part of the 30S ribosomal subunit.

The polypeptide is Small ribosomal subunit protein uS15 (Haloquadratum walsbyi (strain DSM 16790 / HBSQ001)).